The following is a 619-amino-acid chain: Alpha-L-arabinofuranosidase C (619 aa).

The signal sequence occupies residues 1–37; that stretch reads MINHNKTPNILAKVFKRTCGLVSTGAALAILSQAASA. The CBM2 domain occupies 38 to 136; sequence ACTYTIDSEW…TVTGAACNSA (99 aa). Cysteine 39 and cysteine 133 are disulfide-bonded. Positions 163–289 constitute a CBM6 domain; it reads LLQEAQAGFC…LPNIDSLSVV (127 aa). The tract at residues 300-319 is disordered; the sequence is SVSSSSSVQSSSSSSSTPSQ.

It belongs to the glycosyl hydrolase 62 family.

The protein resides in the secreted. It carries out the reaction Hydrolysis of terminal non-reducing alpha-L-arabinofuranoside residues in alpha-L-arabinosides.. Its pathway is glycan metabolism; hemicellulose degradation. Xylanase C contributes to hydrolyze hemicellulose, the major component of plant cell-walls. The chain is Alpha-L-arabinofuranosidase C (xynC) from Cellvibrio japonicus (strain Ueda107) (Pseudomonas fluorescens subsp. cellulosa).